Consider the following 319-residue polypeptide: Geranylgeranyl pyrophosphate synthase (319 aa).

Isopentenyl diphosphate contacts are provided by Lys42, Arg45, and His74. Mg(2+)-binding residues include Asp81 and Asp85. Arg90 is a binding site for dimethylallyl diphosphate. Arg91 provides a ligand contact to isopentenyl diphosphate. 5 residues coordinate dimethylallyl diphosphate: Lys172, Thr173, Gln210, Lys226, and Lys236.

It belongs to the FPP/GGPP synthase family. Homodimer. Requires Mg(2+) as cofactor.

It catalyses the reaction isopentenyl diphosphate + dimethylallyl diphosphate = (2E)-geranyl diphosphate + diphosphate. The catalysed reaction is isopentenyl diphosphate + (2E)-geranyl diphosphate = (2E,6E)-farnesyl diphosphate + diphosphate. The enzyme catalyses isopentenyl diphosphate + (2E,6E)-farnesyl diphosphate = (2E,6E,10E)-geranylgeranyl diphosphate + diphosphate. Its pathway is isoprenoid biosynthesis; geranyl diphosphate biosynthesis; geranyl diphosphate from dimethylallyl diphosphate and isopentenyl diphosphate: step 1/1. It functions in the pathway isoprenoid biosynthesis; farnesyl diphosphate biosynthesis; farnesyl diphosphate from geranyl diphosphate and isopentenyl diphosphate: step 1/1. It participates in isoprenoid biosynthesis; geranylgeranyl diphosphate biosynthesis; geranylgeranyl diphosphate from farnesyl diphosphate and isopentenyl diphosphate: step 1/1. In terms of biological role, catalyzes the addition of 3 molecules of isopentenyl diphosphate (IPP) onto dimethylallyl diphosphate (DMAPP) to form geranylgeranyl pyrophosphate (GGPP). Catalyzes the synthesis of geranylgeranyl pyrophosphate as a major product and of farnesyl pyrophosphate in smaller amounts. The sequence is that of Geranylgeranyl pyrophosphate synthase from Geoglobus acetivorans.